The primary structure comprises 422 residues: Aminopentol aminotransferase (422 aa).

Position 258 is an N6-(pyridoxal phosphate)lysine (Lys258).

This sequence belongs to the class-III pyridoxal-phosphate-dependent aminotransferase family. The cofactor is pyridoxal 5'-phosphate.

The protein localises to the cytoplasm. The catalysed reaction is (2S,3S,5R,10R,12S,14S,15R,16R)-2-amino-12,16-dimethylicosane-3,5,10,14,15-pentol + pyruvate = (3S,5R,10R,12S,14S,15R,16R)-3,5,10,14,15-pentahydroxy-12,16-dimethylicosan-2-one + L-alanine. Functionally, involved in degradation of fumonisin B1. Catalyzes the deamination of aminopentol (HFB1) to 2-keto-HFB1. Pyruvate is the preferred cosubstrate, but it can also use several other alpha-keto acids as amino group acceptors. The sequence is that of Aminopentol aminotransferase (fumI) from Sphingopyxis macrogoltabida (Sphingomonas macrogoltabidus).